Consider the following 81-residue polypeptide: Acyl carrier protein (81 aa).

One can recognise a Carrier domain in the interval 2-80 (ASNEEILAGL…DAVSYIASAQ (79 aa)). Serine 40 carries the post-translational modification O-(pantetheine 4'-phosphoryl)serine.

The protein belongs to the acyl carrier protein (ACP) family. 4'-phosphopantetheine is transferred from CoA to a specific serine of apo-ACP by AcpS. This modification is essential for activity because fatty acids are bound in thioester linkage to the sulfhydryl of the prosthetic group.

It localises to the cytoplasm. It participates in lipid metabolism; fatty acid biosynthesis. Carrier of the growing fatty acid chain in fatty acid biosynthesis. This chain is Acyl carrier protein, found in Renibacterium salmoninarum (strain ATCC 33209 / DSM 20767 / JCM 11484 / NBRC 15589 / NCIMB 2235).